A 189-amino-acid polypeptide reads, in one-letter code: 7-methyl-GTP pyrophosphatase (189 aa).

Asp-71 functions as the Proton acceptor in the catalytic mechanism.

This sequence belongs to the Maf family. YceF subfamily. A divalent metal cation is required as a cofactor.

Its subcellular location is the cytoplasm. The enzyme catalyses N(7)-methyl-GTP + H2O = N(7)-methyl-GMP + diphosphate + H(+). Functionally, nucleoside triphosphate pyrophosphatase that hydrolyzes 7-methyl-GTP (m(7)GTP). May have a dual role in cell division arrest and in preventing the incorporation of modified nucleotides into cellular nucleic acids. This is 7-methyl-GTP pyrophosphatase from Bdellovibrio bacteriovorus (strain ATCC 15356 / DSM 50701 / NCIMB 9529 / HD100).